The following is a 398-amino-acid chain: Lipase member N (398 aa).

The N-terminal stretch at 1 to 18 is a signal peptide; the sequence is MMWLLLTTTCLICGTLNA. In terms of domain architecture, AB hydrolase-1 spans 79–379; the sequence is PVVYMQHALF…DWNHFDFVWG (301 aa). The Nucleophile role is filled by Ser-173. A disulfide bridge connects residues Cys-247 and Cys-256. Asn-272 carries N-linked (GlcNAc...) asparagine glycosylation. Active-site charge relay system residues include Asp-344 and His-373.

This sequence belongs to the AB hydrolase superfamily. Lipase family. Highly expressed in the epidermis in the granular keratinocytes. Also detected in other tissues, although at much lower levels, including lung and spleen.

The protein resides in the secreted. It carries out the reaction a sterol ester + H2O = a sterol + a fatty acid + H(+). The enzyme catalyses a triacylglycerol + H2O = a 1,2-diacylglycerol + a fatty acid + H(+). The catalysed reaction is a triacylglycerol + H2O = a diacylglycerol + a fatty acid + H(+). It catalyses the reaction a cholesterol ester + H2O = cholesterol + a fatty acid + H(+). In terms of biological role, plays a highly specific role in the last step of keratinocyte differentiation. Contains two distinct domains: the alpha/beta hydrolase fold and the abhydrolase-associated lipase region, also features the consensus sequence of the active site of a genuine lipase. May have an essential function in lipid metabolism of the most differentiated epidermal layers. The chain is Lipase member N (LIPN) from Homo sapiens (Human).